Consider the following 238-residue polypeptide: tRNA (guanine-N(7)-)-methyltransferase (238 aa).

Residues E68, E93, D120, and D143 each coordinate S-adenosyl-L-methionine. D143 is an active-site residue. Substrate is bound by residues K147, D179, and 216 to 219 (TKFE).

This sequence belongs to the class I-like SAM-binding methyltransferase superfamily. TrmB family. Monomer.

It carries out the reaction guanosine(46) in tRNA + S-adenosyl-L-methionine = N(7)-methylguanosine(46) in tRNA + S-adenosyl-L-homocysteine. The protein operates within tRNA modification; N(7)-methylguanine-tRNA biosynthesis. Functionally, catalyzes the formation of N(7)-methylguanine at position 46 (m7G46) in tRNA. This Edwardsiella ictaluri (strain 93-146) protein is tRNA (guanine-N(7)-)-methyltransferase.